The following is a 492-amino-acid chain: 3-octaprenyl-4-hydroxybenzoate carboxy-lyase (492 aa).

Asn-175 serves as a coordination point for Mn(2+). Residues 178-180 (IYR), 192-194 (RWL), and 197-198 (RG) contribute to the prenylated FMN site. Glu-241 is a Mn(2+) binding site. Asp-290 serves as the catalytic Proton donor.

The protein belongs to the UbiD family. In terms of assembly, homohexamer. Requires prenylated FMN as cofactor. Mn(2+) serves as cofactor.

It localises to the cell membrane. The catalysed reaction is a 4-hydroxy-3-(all-trans-polyprenyl)benzoate + H(+) = a 2-(all-trans-polyprenyl)phenol + CO2. Its pathway is cofactor biosynthesis; ubiquinone biosynthesis. In terms of biological role, catalyzes the decarboxylation of 3-octaprenyl-4-hydroxy benzoate to 2-octaprenylphenol, an intermediate step in ubiquinone biosynthesis. The chain is 3-octaprenyl-4-hydroxybenzoate carboxy-lyase from Salmonella choleraesuis (strain SC-B67).